Reading from the N-terminus, the 236-residue chain is Small ribosomal subunit protein uS2c (236 aa).

The protein belongs to the universal ribosomal protein uS2 family.

The protein resides in the plastid. In Cuscuta gronovii (Common dodder), this protein is Small ribosomal subunit protein uS2c (rps2).